The sequence spans 155 residues: Small ribosomal subunit protein uS7cz/uS7cy (155 aa).

This sequence belongs to the universal ribosomal protein uS7 family. Part of the 30S ribosomal subunit.

It is found in the plastid. It localises to the chloroplast. In terms of biological role, one of the primary rRNA binding proteins, it binds directly to 16S rRNA where it nucleates assembly of the head domain of the 30S subunit. This is Small ribosomal subunit protein uS7cz/uS7cy (rps7-A) from Coffea arabica (Arabian coffee).